The chain runs to 1391 residues: MAKSYTGRKRVRKSFGRIPTVAPMPNLIEVQKSSYDHFLQMDTAPEQRGNVGLQEVFKSVFPIKDFSERGTLEFVRYELEQPKYDVEECQQRGMTFAAPLKVTLRLVVWDIDEDTGSRSIRDIKEQDVYMGDMPLMTSNGTFVINGTERVIVSQMHRSPGVFFDHDKGKTHSSGKYLFAARVIPYRGSWLDFEFDAKDLVYVRIDRRRKLPVTTLLYALDGMNTAALRAQRAAEGRGLEQSEIKGMTSEEILSYFYGKVVYTRGPKGWKTPFDAERLKGVKLVSDLIDAKSGEKVADAGSKMTPRLGKKLREAGLTDIVVFPEDMIGQYVAEDIINEQTGEIFTEAGDELTANLVAELEKAGISELPVLAIDHINVGPYMRNTLAIDKNSSREEALIDIYRVMRPGEPPTLETAEALFTGLFFDSERYDLSAVGRVKMNSRLNTPEVADTVRVLRKEDILGVIKVLVELKDGKGEIDDIDHLGNRRVRSVGELMENQYRVGLLRMERAIRERMSSVDIDSVMPHDLINAKPAAAAVREFFGSSQLSQFMDQTNPLSEITHKRRLSALGPGGLTRERAGFEVRDVHPTHYGRICPIETPEGPNIGLINSLATYARVNQYGFIEAPYRKVFDGRVTSDVVYLSAMEEGRYTVAQANSILDADGRFTEDLVSCRRAGDFVMVPPNEINMIDVSPKQLVSVAAALIPFLENDDANRALMGSNMQRQAVPLIRAEAPLVGTGMEQAVARDSGAAITAKRTGVVDQVDATRVVIRATEETQASASGVDIYNLLKFQRSNQNTCITQRPLVKVGDLIQKGDIIADGPSTQLGELALGRNVLVAFMPWNGYNFEDSILISERIVRDDVFTSIHIEEFEVMARDTKLGQEEITRDIPNVGEEALKNLDEAGIVYIGAEVKPGDILVGKVTPKGESPMTPEEKLLRAIFGEKASDVRDTSLRLPPGVSGTIVEVRVFSRRGVEKDERALAIERAEIERLAKDRDDERHILERSFFARLKALIIGKKVVSGPKGIKAGTVLADANMDELHPSTWRNIAIDDDAVMADAEALKRAFDQQVDKLQERFENKVEKLQRGDELPPGVMKMVKVFVAVKRKLQPGDKMAGRHGNKGVISRIVPLEDMPYLEDGQQVDIVLNPLGVPSRMNVGQILETHLGWACAGLGQQIGGMLDKYKRNAATIIDLKSKLKDVYGDAIYEDEIAGLADNEITELAHNLTPGVPIATPVFDGARESDIVAMLTKAGRSSSGQVTLVDGRTGEPFDRKVTVGYIYMLKLHHLVDDKIHARSIGPYSLVTQQPLGGKAQFGGQRFGEMEVWALEAYGAAYTLQEMLTVKSDDVSGRTKVYEAIVRGDDTFEAGIPESFNVLVKELRSLGLNVELTQRNY.

It belongs to the RNA polymerase beta chain family. As to quaternary structure, the RNAP catalytic core consists of 2 alpha, 1 beta, 1 beta' and 1 omega subunit. When a sigma factor is associated with the core the holoenzyme is formed, which can initiate transcription.

The catalysed reaction is RNA(n) + a ribonucleoside 5'-triphosphate = RNA(n+1) + diphosphate. In terms of biological role, DNA-dependent RNA polymerase catalyzes the transcription of DNA into RNA using the four ribonucleoside triphosphates as substrates. The chain is DNA-directed RNA polymerase subunit beta from Paramagnetospirillum magneticum (strain ATCC 700264 / AMB-1) (Magnetospirillum magneticum).